We begin with the raw amino-acid sequence, 178 residues long: Large ribosomal subunit protein bL17 (178 aa).

2 stretches are compositionally biased toward low complexity: residues 123 to 139 (KAPA…NTAT) and 151 to 160 (EDAAAQAPVA). The segment at 123-178 (KAPASAADAKAQINTATEAKEAEPEAPAEDAAAQAPVADEQKAAEVDEKAEEKPEA) is disordered. Residues 161–178 (DEQKAAEVDEKAEEKPEA) are compositionally biased toward basic and acidic residues.

The protein belongs to the bacterial ribosomal protein bL17 family. As to quaternary structure, part of the 50S ribosomal subunit. Contacts protein L32.

This chain is Large ribosomal subunit protein bL17, found in Cutibacterium acnes (strain DSM 16379 / KPA171202) (Propionibacterium acnes).